Here is an 84-residue protein sequence, read N- to C-terminus: Conotoxin Tx8.1 (84 aa).

The signal sequence occupies residues 1-19 (LKMGAMFVLLLLFTLASSH). Residues 20–44 (REGDIQARKTHLKSDFYRTLPRFAR) constitute a propeptide that is removed on maturation.

The protein belongs to the conotoxin S superfamily. Post-translationally, contains 5 disulfide bonds. As to expression, expressed by the venom duct.

The protein resides in the secreted. The protein is Conotoxin Tx8.1 of Conus textile (Cloth-of-gold cone).